A 43-amino-acid polypeptide reads, in one-letter code: Protein PsbN (43 aa).

The chain crosses the membrane as a helical span at residues 5-27; that stretch reads TIFSIFFSCLLIGLTGYSLYTSF.

It belongs to the PsbN family.

It localises to the plastid. The protein localises to the chloroplast thylakoid membrane. In terms of biological role, may play a role in photosystem I and II biogenesis. In Mesostigma viride (Green alga), this protein is Protein PsbN.